The chain runs to 304 residues: Glutaminase (304 aa).

Residues S63, N114, E158, N165, Y189, Y240, and V258 each coordinate substrate.

It belongs to the glutaminase family. In terms of assembly, homotetramer.

The catalysed reaction is L-glutamine + H2O = L-glutamate + NH4(+). The sequence is that of Glutaminase from Shewanella sp. (strain ANA-3).